The following is a 348-amino-acid chain: MTVRIAINGFGRIGRNVVRALYESGRRAEITVVAINELADAAGMAHLLKYDTSHGRFAWEVRHEREQLFVGDDVIRILHERTLADLPWRELGVDVVLDCTGVYGNREHGEAHIAAGAKKVLFSHPGSNDLDATVVFGVNQNELRAEHRIVSNASCTTNCIIPVIKLLDDAYGIESGTVTTIHSAMNDQQVIDAYHSDLRRTRAASQSIIPVDTKLAAGITRIFPQFNDRFEAIAVRVPTINVTAIDLSVTVKKPVKASEVNQLLQKAAQGAFHGIVDYTESPLVSIDFNHDPHSAIVDGTQTRVSGAHLIKTLVWCDNEWGFANRMLDTTLAMAAVGFRLDASASTKL.

NAD(+) is bound by residues 12-13 and Arg-81; that span reads RI. Substrate-binding positions include 154 to 156, Arg-200, 213 to 214, and Arg-236; these read SCT and TK. The active-site Nucleophile is Cys-155. Asn-318 is an NAD(+) binding site.

The protein belongs to the glyceraldehyde-3-phosphate dehydrogenase family. Epd subfamily. As to quaternary structure, homotetramer.

The protein resides in the cytoplasm. The enzyme catalyses D-erythrose 4-phosphate + NAD(+) + H2O = 4-phospho-D-erythronate + NADH + 2 H(+). It functions in the pathway cofactor biosynthesis; pyridoxine 5'-phosphate biosynthesis; pyridoxine 5'-phosphate from D-erythrose 4-phosphate: step 1/5. In terms of biological role, catalyzes the NAD-dependent conversion of D-erythrose 4-phosphate to 4-phosphoerythronate. In Salmonella dublin (strain CT_02021853), this protein is D-erythrose-4-phosphate dehydrogenase.